The sequence spans 153 residues: uncharacterized protein (153 aa).

This is an uncharacterized protein from Saccharomyces cerevisiae (strain ATCC 204508 / S288c) (Baker's yeast).